A 276-amino-acid polypeptide reads, in one-letter code: D-aminoacyl-tRNA deacylase (276 aa).

Belongs to the DtdA deacylase family. Monomer. The cofactor is Zn(2+).

It catalyses the reaction a D-aminoacyl-tRNA + H2O = a tRNA + a D-alpha-amino acid + H(+). The enzyme catalyses glycyl-tRNA(Ala) + H2O = tRNA(Ala) + glycine + H(+). Functionally, D-aminoacyl-tRNA deacylase with broad substrate specificity. By recycling D-aminoacyl-tRNA to D-amino acids and free tRNA molecules, this enzyme counteracts the toxicity associated with the formation of D-aminoacyl-tRNA entities in vivo. This Korarchaeum cryptofilum (strain OPF8) protein is D-aminoacyl-tRNA deacylase.